Consider the following 379-residue polypeptide: Cysteine-rich receptor-like protein kinase 44 (379 aa).

The Protein kinase domain maps to 56–336 (FSPYNHLGEG…VRMLNANSFT (281 aa)). ATP contacts are provided by residues 62-70 (LGEGGFGAV) and Lys-84. Tyr-129 carries the phosphotyrosine modification. Asp-181 acts as the Proton acceptor in catalysis. Ser-185 is subject to Phosphoserine. Thr-223 bears the Phosphothreonine mark. Tyr-231 is subject to Phosphotyrosine.

Belongs to the protein kinase superfamily. Ser/Thr protein kinase family. CRK subfamily.

It carries out the reaction L-seryl-[protein] + ATP = O-phospho-L-seryl-[protein] + ADP + H(+). The catalysed reaction is L-threonyl-[protein] + ATP = O-phospho-L-threonyl-[protein] + ADP + H(+). In Arabidopsis thaliana (Mouse-ear cress), this protein is Cysteine-rich receptor-like protein kinase 44.